The following is a 414-amino-acid chain: Serine hydroxymethyltransferase (414 aa).

(6S)-5,6,7,8-tetrahydrofolate is bound by residues leucine 121 and 125–127; that span reads GHL. Lysine 229 is subject to N6-(pyridoxal phosphate)lysine.

It belongs to the SHMT family. In terms of assembly, homodimer. Pyridoxal 5'-phosphate is required as a cofactor.

It localises to the cytoplasm. It catalyses the reaction (6R)-5,10-methylene-5,6,7,8-tetrahydrofolate + glycine + H2O = (6S)-5,6,7,8-tetrahydrofolate + L-serine. It participates in one-carbon metabolism; tetrahydrofolate interconversion. Its pathway is amino-acid biosynthesis; glycine biosynthesis; glycine from L-serine: step 1/1. Catalyzes the reversible interconversion of serine and glycine with tetrahydrofolate (THF) serving as the one-carbon carrier. This reaction serves as the major source of one-carbon groups required for the biosynthesis of purines, thymidylate, methionine, and other important biomolecules. Also exhibits THF-independent aldolase activity toward beta-hydroxyamino acids, producing glycine and aldehydes, via a retro-aldol mechanism. This Polaromonas naphthalenivorans (strain CJ2) protein is Serine hydroxymethyltransferase.